A 356-amino-acid polypeptide reads, in one-letter code: Phosphotriesterase-related protein (356 aa).

A divalent metal cation contacts are provided by His-23, His-25, Glu-175, His-207, His-236, and Asp-304.

Belongs to the metallo-dependent hydrolases superfamily. Phosphotriesterase family. Requires a divalent metal cation as cofactor.

The polypeptide is Phosphotriesterase-related protein (Aedes aegypti (Yellowfever mosquito)).